The chain runs to 69 residues: Putative defensin-like protein 312 (69 aa).

The N-terminal stretch at 1–19 (MSCFSFLVYFLLFIVTKMS) is a signal peptide. Cysteines 45 and 57 form a disulfide.

It belongs to the DEFL family.

The protein localises to the secreted. The protein is Putative defensin-like protein 312 of Arabidopsis thaliana (Mouse-ear cress).